A 174-amino-acid polypeptide reads, in one-letter code: Methylated-DNA--protein-cysteine methyltransferase (174 aa).

Residue Cys141 is the Nucleophile; methyl group acceptor of the active site.

This sequence belongs to the MGMT family.

The protein localises to the cytoplasm. It catalyses the reaction a 6-O-methyl-2'-deoxyguanosine in DNA + L-cysteinyl-[protein] = S-methyl-L-cysteinyl-[protein] + a 2'-deoxyguanosine in DNA. The enzyme catalyses a 4-O-methyl-thymidine in DNA + L-cysteinyl-[protein] = a thymidine in DNA + S-methyl-L-cysteinyl-[protein]. Functionally, involved in the cellular defense against the biological effects of O6-methylguanine (O6-MeG) and O4-methylthymine (O4-MeT) in DNA. Repairs the methylated nucleobase in DNA by stoichiometrically transferring the methyl group to a cysteine residue in the enzyme. This is a suicide reaction: the enzyme is irreversibly inactivated. The protein is Methylated-DNA--protein-cysteine methyltransferase of Thermococcus gammatolerans (strain DSM 15229 / JCM 11827 / EJ3).